Reading from the N-terminus, the 87-residue chain is Neutrophil antibiotic peptide NP-3A (87 aa).

The N-terminal stretch at 1 to 19 is a signal peptide; the sequence is MRTLTLLTTLLLLALHTQA. The propeptide occupies 20–58; it reads ESPQGSTKEAPDEEQDISVFFGGDKGTALQDAAVKAGVT. 3 disulfides stabilise this stretch: Cys59/Cys87, Cys61/Cys76, and Cys66/Cys86.

It belongs to the alpha-defensin family. Highest expression in bone marrow and to a much lesser extent in small intestine.

It is found in the secreted. Functionally, active in vitro against S.aureus, fungi, Gram-positive and Gram-negative bacteria and to a lesser extent against an enveloped virus. The polypeptide is Neutrophil antibiotic peptide NP-3A (Rattus norvegicus (Rat)).